We begin with the raw amino-acid sequence, 107 residues long: Large ribosomal subunit protein eL33 (107 aa).

It belongs to the eukaryotic ribosomal protein eL33 family. As to quaternary structure, component of the large ribosomal subunit. Mature ribosomes consist of a small (40S) and a large (60S) subunit. The 40S subunit contains about 32 different proteins and 1 molecule of RNA (18S). The 60S subunit contains 45 different proteins and 3 molecules of RNA (25S, 5.8S and 5S).

It is found in the cytoplasm. In terms of biological role, component of the ribosome, a large ribonucleoprotein complex responsible for the synthesis of proteins in the cell. The small ribosomal subunit (SSU) binds messenger RNAs (mRNAs) and translates the encoded message by selecting cognate aminoacyl-transfer RNA (tRNA) molecules. The large subunit (LSU) contains the ribosomal catalytic site termed the peptidyl transferase center (PTC), which catalyzes the formation of peptide bonds, thereby polymerizing the amino acids delivered by tRNAs into a polypeptide chain. The nascent polypeptides leave the ribosome through a tunnel in the LSU and interact with protein factors that function in enzymatic processing, targeting, and the membrane insertion of nascent chains at the exit of the ribosomal tunnel. The sequence is that of Large ribosomal subunit protein eL33 from Candida albicans (strain SC5314 / ATCC MYA-2876) (Yeast).